The following is a 1270-amino-acid chain: DNA-directed RNA polymerase subunit beta (1270 aa).

The protein belongs to the RNA polymerase beta chain family. As to quaternary structure, the RNAP catalytic core consists of 2 alpha, 1 beta, 1 beta' and 1 omega subunit. When a sigma factor is associated with the core the holoenzyme is formed, which can initiate transcription.

It carries out the reaction RNA(n) + a ribonucleoside 5'-triphosphate = RNA(n+1) + diphosphate. In terms of biological role, DNA-dependent RNA polymerase catalyzes the transcription of DNA into RNA using the four ribonucleoside triphosphates as substrates. The polypeptide is DNA-directed RNA polymerase subunit beta (Bacteroides thetaiotaomicron (strain ATCC 29148 / DSM 2079 / JCM 5827 / CCUG 10774 / NCTC 10582 / VPI-5482 / E50)).